We begin with the raw amino-acid sequence, 300 residues long: Ribosomal protein bS6--L-glutamate ligase (300 aa).

The ATP-grasp domain maps to 104-287; the sequence is MQLLARQGID…IAGKMIRWIE (184 aa). Residues K141, 178-179, D187, and 211-213 contribute to the ATP site; these read EY and RSN. Mg(2+)-binding residues include D248, E260, and N262. Mn(2+)-binding residues include D248, E260, and N262.

The protein belongs to the RimK family. The cofactor is Mg(2+). Mn(2+) is required as a cofactor.

Its function is as follows. An L-glutamate ligase that catalyzes the ATP-dependent post-translational addition of glutamate residues to the C-terminus of ribosomal protein bS6 (RpsF). Is also able to catalyze the synthesis of poly-alpha-glutamate in vitro, via ATP hydrolysis from unprotected glutamate as substrate. The number of glutamate residues added to either RpsF or to poly-alpha-glutamate changes with pH. The polypeptide is Ribosomal protein bS6--L-glutamate ligase (Shigella flexneri serotype 5b (strain 8401)).